Consider the following 326-residue polypeptide: Photosystem II assembly factor Ycf39 (326 aa).

This sequence belongs to the NmrA-type oxidoreductase family. Ycf39 subfamily. In terms of assembly, purified in several chlorophyll- and carotenoid-containing complexes, including photosystem II (PSII) assembly intermediate complex RCII* (iD1, D1, D2, PsbE, PsbF, PsbI, Ycf39, Ycf48, HliC and HliD) and the Ycf39-Hlip complex (Ycf39, HliC, HliD and pigments). Tagged protein does not pull down mature PSII.

It is found in the cellular thylakoid membrane. Functionally, requires HliD to bind pigments. The Ycf39-Hlip complex binds D1 at an early stage of PSII assembly along with Ycf48, ribosomes and ChlG, the last enzyme in chlorophyll biosynthesis; it may be involved in chlorophyll reuse and delivery to D1 in the initial stages of PSII assembly. The Ycf39-Hlip complex efficiently quenches chlorophyll fluorescence, contributing to photoprotection. The sequence is that of Photosystem II assembly factor Ycf39 from Synechocystis sp. (strain ATCC 27184 / PCC 6803 / Kazusa).